Here is a 331-residue protein sequence, read N- to C-terminus: Probable tRNA-dihydrouridine synthase (331 aa).

Residues 17-19 (PMS) and Gln-72 contribute to the FMN site. Cys-102 (proton donor) is an active-site residue. FMN-binding positions include Lys-141, 202–204 (NGD), and 226–227 (GR).

The protein belongs to the Dus family. It depends on FMN as a cofactor.

It carries out the reaction a 5,6-dihydrouridine in tRNA + NAD(+) = a uridine in tRNA + NADH + H(+). The enzyme catalyses a 5,6-dihydrouridine in tRNA + NADP(+) = a uridine in tRNA + NADPH + H(+). Catalyzes the synthesis of 5,6-dihydrouridine (D), a modified base found in the D-loop of most tRNAs, via the reduction of the C5-C6 double bond in target uridines. The polypeptide is Probable tRNA-dihydrouridine synthase (dus) (Rickettsia conorii (strain ATCC VR-613 / Malish 7)).